Reading from the N-terminus, the 328-residue chain is DNA-directed RNA polymerase subunit alpha (328 aa).

Residues 1–231 (MIYQMQMPEK…EHVSLFANFS (231 aa)) form an alpha N-terminal domain (alpha-NTD) region. Residues 252 to 328 (MRKMLLTRIE…MDITKYQMKG (77 aa)) form an alpha C-terminal domain (alpha-CTD) region.

It belongs to the RNA polymerase alpha chain family. Homodimer. The RNAP catalytic core consists of 2 alpha, 1 beta, 1 beta' and 1 omega subunit. When a sigma factor is associated with the core the holoenzyme is formed, which can initiate transcription.

It catalyses the reaction RNA(n) + a ribonucleoside 5'-triphosphate = RNA(n+1) + diphosphate. DNA-dependent RNA polymerase catalyzes the transcription of DNA into RNA using the four ribonucleoside triphosphates as substrates. This Chlorobium phaeobacteroides (strain BS1) protein is DNA-directed RNA polymerase subunit alpha.